Here is a 644-residue protein sequence, read N- to C-terminus: Translation factor GUF1, mitochondrial (644 aa).

Residues 1–14 (MLRKAFRYLVPVRC) constitute a mitochondrion transit peptide. One can recognise a tr-type G domain in the interval 46–227 (ERYRNFSIVA…AIVDRIPPPT (182 aa)). Residues 55–62 (AHVDHGKS), 120–124 (DTPGH), and 174–177 (NKID) contribute to the GTP site.

It belongs to the TRAFAC class translation factor GTPase superfamily. Classic translation factor GTPase family. LepA subfamily.

The protein resides in the mitochondrion inner membrane. It carries out the reaction GTP + H2O = GDP + phosphate + H(+). In terms of biological role, promotes mitochondrial protein synthesis. May act as a fidelity factor of the translation reaction, by catalyzing a one-codon backward translocation of tRNAs on improperly translocated ribosomes. Binds to mitochondrial ribosomes in a GTP-dependent manner. The sequence is that of Translation factor GUF1, mitochondrial from Eremothecium gossypii (strain ATCC 10895 / CBS 109.51 / FGSC 9923 / NRRL Y-1056) (Yeast).